A 615-amino-acid chain; its full sequence is MAGSVDKPSYELFSKDTRAFVYGMQTKAVQGMLDFDYMCGRTVPSVAAIIYTFGSQSISKLYWGTKEILLPVYRTIEEACTKHPEVDVVVNFASSRSAYASTMELMEFPQIRCIAIIAEGVPERRAREILVTSKEKNVVIIGPATVGGIKPGCFKIGNTGGMMDNIVASKLYRPGSVAYVSKSGGMSNELNNIISHTTDGVYEGIAIGGDRYPGTTFIDHLIRFEADPACKLMVLLGEVGGVEEYRVIEAVKNGTIKKPIVAWAIGTCSSMFKTEVQFGHAGSFANSELETAVAKNQAMREAGIYVPETFEKLPALLQEVYEGLVKKGVIVPQPEVAPPNIPLDYAWAKELGLVRKPSSFICTISNDRGSELTYNNVPISKVFEEELGIGGVISLLWLRRRLPSYATKFLEMVLQLTADHGPCVSGAMNTIITTRAGKDLISSLVAGLLTIGTRFGGALDGAAQEFSKAYDAGLSPRAFVDSCRKANKLIPGIGHRIKSRNNPDLRVELVKGYVKKNFPSTKLLDYALAVENVTTSKKDNLILNVDGCIAVCFVDLLRNCGAFTLEEANEYINLGILNGMFVLGRSIGLIGHHLDQKRLRAPLYRHPWDDFLYLS.

ATP is bound by residues 221–241 (LIRF…EVGG) and 272–298 (FKTE…KNQA). Residue Glu238 participates in Mg(2+) binding. The active-site Tele-phosphohistidine intermediate is His280. 299–309 (MREAGIYVPET) provides a ligand contact to CoA. Ser359 carries the post-translational modification Phosphoserine.

Belongs to the succinate/malate CoA ligase alpha subunit family. In terms of assembly, composed of two subunits.

Its subcellular location is the cytoplasm. It carries out the reaction oxaloacetate + acetyl-CoA + ADP + phosphate = citrate + ATP + CoA. In terms of biological role, catalyzes the formation of cytosolic acetyl-CoA, which is mainly used for the biosynthesis of fatty acids and sterols. The chain is Probable ATP-citrate synthase subunit 1 from Schizosaccharomyces pombe (strain 972 / ATCC 24843) (Fission yeast).